A 167-amino-acid polypeptide reads, in one-letter code: Phosphopantetheine adenylyltransferase (167 aa).

Residue Thr-9 participates in substrate binding. ATP contacts are provided by residues 9–10 (TF) and His-17. Lys-41, Leu-73, and Arg-87 together coordinate substrate. ATP contacts are provided by residues 88–90 (GLR), Glu-98, and 123–129 (YQFISGT).

It belongs to the bacterial CoaD family. As to quaternary structure, homohexamer. Mg(2+) is required as a cofactor.

It is found in the cytoplasm. The enzyme catalyses (R)-4'-phosphopantetheine + ATP + H(+) = 3'-dephospho-CoA + diphosphate. It functions in the pathway cofactor biosynthesis; coenzyme A biosynthesis; CoA from (R)-pantothenate: step 4/5. Functionally, reversibly transfers an adenylyl group from ATP to 4'-phosphopantetheine, yielding dephospho-CoA (dPCoA) and pyrophosphate. This chain is Phosphopantetheine adenylyltransferase, found in Ralstonia pickettii (strain 12J).